The following is a 246-amino-acid chain: 4-aminobenzoate synthase (246 aa).

The Fe(2+) site is built by glutamate 88, histidine 95, glutamate 149, histidine 181, aspartate 185, and histidine 188.

It belongs to the CADD family. As to quaternary structure, homodimer. It depends on Fe(2+) as a cofactor. Mn(2+) serves as cofactor.

Involved in de novo para-aminobenzoate (PABA) biosynthesis. Acts as a self-sacrificing or 'suicide' enzyme that utilizes its own active site tyrosine residue(s) as the substrate for PABA synthesis. The side chain of the tyrosine residue is released from the protein backbone via cleavage of the C(alpha)-C(beta) bond, leaving a glycine in place of the original tyrosine residue. Reaction requires O(2) and a reduced dimetal cofactor. This chain is 4-aminobenzoate synthase, found in Nitrosomonas europaea (strain ATCC 19718 / CIP 103999 / KCTC 2705 / NBRC 14298).